Consider the following 338-residue polypeptide: ATPase GET3 (338 aa).

33 to 40 is an ATP binding site; the sequence is KGGVGKTT. Aspartate 62 is an active-site residue. 2 residues coordinate ATP: glutamate 242 and asparagine 269. 2 residues coordinate Zn(2+): cysteine 280 and cysteine 283.

The protein belongs to the arsA ATPase family. As to quaternary structure, homodimer.

Its subcellular location is the cytoplasm. The protein localises to the endoplasmic reticulum. ATPase required for the post-translational delivery of tail-anchored (TA) proteins to the endoplasmic reticulum. Recognizes and selectively binds the transmembrane domain of TA proteins in the cytosol. This complex then targets to the endoplasmic reticulum by membrane-bound receptors, where the tail-anchored protein is released for insertion. This process is regulated by ATP binding and hydrolysis. ATP binding drives the homodimer towards the closed dimer state, facilitating recognition of newly synthesized TA membrane proteins. ATP hydrolysis is required for insertion. Subsequently, the homodimer reverts towards the open dimer state, lowering its affinity for the membrane-bound receptor, and returning it to the cytosol to initiate a new round of targeting. The sequence is that of ATPase GET3 from Uncinocarpus reesii (strain UAMH 1704).